Consider the following 493-residue polypeptide: Poly(ribitol-phosphate) alpha-N-acetylglucosaminyltransferase (493 aa).

UDP-N-acetyl-alpha-D-glucosamine is bound by residues Gly-17, Lys-59, His-249, Arg-326, Lys-331, Thr-383, and Glu-403 to Glu-411.

Belongs to the glycosyltransferase group 1 family. Homotrimer.

The protein resides in the cytoplasm. The enzyme catalyses 4-O-[(D-ribitylphospho)(n)-di{(2R)-glycerylphospho}]-N-acetyl-beta-D-mannosaminyl-(1-&gt;4)-N-acetyl-alpha-D-glucosaminyl di-trans,octa-cis-undecaprenyl diphosphate + n UDP-N-acetyl-alpha-D-glucosamine = 4-O-([2-N-acetyl-alpha-D-glucosaminyl-1-D-ribitylphospho](n)-di{[2R]-1-glycerylphospho})-N-acetyl-beta-D-mannosaminyl-(1-&gt;4)-N-acetyl-alpha-D-glucosaminyl di-trans,octa-cis-undecaprenyl diphosphate + n UDP + n H(+). Its pathway is cell wall biogenesis; poly(ribitol phosphate) teichoic acid biosynthesis. Attaches N-acetyl-alpha-D-glucosamine residues to poly(RboP)-wall teichoic acids (WTAs). This is Poly(ribitol-phosphate) alpha-N-acetylglucosaminyltransferase from Staphylococcus aureus (strain COL).